Here is a 554-residue protein sequence, read N- to C-terminus: Laccase-8 (554 aa).

The first 21 residues, 1–21, serve as a signal peptide directing secretion; that stretch reads MASAAMLVPLVLVLCTAAASA. 2 Plastocyanin-like domains span residues 29–145 and 156–309; these read KVGG…PRNG and EEIP…YKGV. Residues histidine 79 and histidine 81 each coordinate Cu cation. N-linked (GlcNAc...) asparagine glycosylation is found at asparagine 107 and asparagine 113. 2 residues coordinate Cu cation: histidine 124 and histidine 126. Asparagine 271 and asparagine 369 each carry an N-linked (GlcNAc...) asparagine glycan. The Plastocyanin-like 3 domain occupies 411-537; the sequence is DFPDFPPPMQ…AMVFEVLNGP (127 aa). Residues histidine 455, histidine 458, histidine 460, histidine 516, cysteine 517, histidine 518, and histidine 522 each coordinate Cu cation.

The protein belongs to the multicopper oxidase family. Requires Cu cation as cofactor.

The protein resides in the secreted. It localises to the extracellular space. Its subcellular location is the apoplast. It carries out the reaction 4 hydroquinone + O2 = 4 benzosemiquinone + 2 H2O. Lignin degradation and detoxification of lignin-derived products. The protein is Laccase-8 (LAC8) of Oryza sativa subsp. japonica (Rice).